Reading from the N-terminus, the 106-residue chain is UPF0145 protein BH0643 (106 aa).

This sequence belongs to the UPF0145 family.

The sequence is that of UPF0145 protein BH0643 from Halalkalibacterium halodurans (strain ATCC BAA-125 / DSM 18197 / FERM 7344 / JCM 9153 / C-125) (Bacillus halodurans).